The sequence spans 101 residues: MAKSSMKAREAKRAQLVAKFAEKRAALKAIISSPTTSDDDRWDAVLKLQALPRDSSAARQRNRCSQTGRPHGFLRKFGLSRIKLREATMRGEVPGLRKASW.

Belongs to the universal ribosomal protein uS14 family. Part of the 30S ribosomal subunit. Contacts proteins S3 and S10.

Functionally, binds 16S rRNA, required for the assembly of 30S particles and may also be responsible for determining the conformation of the 16S rRNA at the A site. The chain is Small ribosomal subunit protein uS14 from Shewanella halifaxensis (strain HAW-EB4).